The primary structure comprises 163 residues: Nucleotide-binding protein Acel_0286 (163 aa).

Belongs to the YajQ family.

In terms of biological role, nucleotide-binding protein. This is Nucleotide-binding protein Acel_0286 from Acidothermus cellulolyticus (strain ATCC 43068 / DSM 8971 / 11B).